The sequence spans 210 residues: Uridine kinase (210 aa).

14-21 lines the ATP pocket; the sequence is GGSGSGKT.

Belongs to the uridine kinase family.

It is found in the cytoplasm. It carries out the reaction uridine + ATP = UMP + ADP + H(+). The enzyme catalyses cytidine + ATP = CMP + ADP + H(+). It functions in the pathway pyrimidine metabolism; CTP biosynthesis via salvage pathway; CTP from cytidine: step 1/3. The protein operates within pyrimidine metabolism; UMP biosynthesis via salvage pathway; UMP from uridine: step 1/1. This is Uridine kinase from Deinococcus radiodurans (strain ATCC 13939 / DSM 20539 / JCM 16871 / CCUG 27074 / LMG 4051 / NBRC 15346 / NCIMB 9279 / VKM B-1422 / R1).